A 1081-amino-acid chain; its full sequence is Teashirt homolog 3 (1081 aa).

Disordered regions lie at residues 25-104, 141-161, and 238-257; these read LVED…EVQV, PSSE…SSCG, and HYRD…WSKP. Residues 26 to 37 are compositionally biased toward acidic residues; it reads VEDDVEPEEQAA. A compositionally biased stretch (basic and acidic residues) spans 68 to 87; the sequence is SSHEMDSESHISETSDRMAD. C2H2-type zinc fingers lie at residues 214 to 238 and 275 to 299; these read FRCK…ETGH and LKCM…KTKH. A compositionally biased stretch (basic and acidic residues) spans 238 to 247; the sequence is HYRDDNHETD. Positions 325–346 are disordered; the sequence is SLELELPSSPDSTGGTPKATLS. The segment at 387–410 adopts a C2H2-type 3; atypical zinc-finger fold; that stretch reads KCMECGSSHDTLQELTAHMMVTGH. Positions 474–491 are enriched in basic and acidic residues; the sequence is VDKEKAVPDEKPKEREKP. 4 disordered regions span residues 474–499, 626–699, 792–824, and 855–897; these read VDKE…EKYD, EKMK…KPLS, LTKG…TVTT, and TESH…RQSN. Residues 606-630 adopt a coiled-coil conformation; it reads NFHAMEELVKKVTEKVAKVEEKMKE. Positions 660-670 are enriched in polar residues; that stretch reads SDGSFKSQENS. Ser682 bears the Phosphoserine mark. 2 stretches are compositionally biased toward low complexity: residues 800–824 and 856–869; these read GCSL…TVTT and ESHT…SSIS. Residues 891-961 constitute a DNA-binding region (homeobox; atypical); it reads RKGRQSNWNP…NVKYQLRRTG (71 aa). C2H2-type zinc fingers lie at residues 976–998 and 1041–1064; these read FFCN…LESH and YQCK…SKTH.

The protein belongs to the teashirt C2H2-type zinc-finger protein family. Interacts (via N-terminus) with HDAC1 and HDAC2; the interaction is direct. Found in a trimeric complex with APBB1 and HDAC1; the interaction between HDAC1 and APBB1 is mediated by TSHZ3. Interacts (via homeobox domain) with APBB1 (via PID domain 1). In terms of tissue distribution, expressed in corticostriatal neurons.

The protein resides in the nucleus. It localises to the cell projection. The protein localises to the growth cone. Transcriptional regulator involved in developmental processes. Functions in association with APBB1, SET and HDAC factors as a transcriptional repressor, that inhibits the expression of CASP4. TSHZ3-mediated transcription repression involves the recruitment of histone deacetylases HDAC1 and HDAC2. Associates with chromatin in a region surrounding the CASP4 transcriptional start site(s). Regulates the development of neurons involved in both respiratory rhythm and airflow control. Promotes maintenance of nucleus ambiguus (nA) motoneurons, which govern upper airway function, and establishes a respiratory rhythm generator (RRG) activity compatible with survival at birth. Involved in the differentiation of the proximal uretic smooth muscle cells during developmental processes. Involved in the up-regulation of myocardin, that directs the expression of smooth muscle cells in the proximal ureter. Involved in the modulation of glutamatergic synaptic transmission and long-term synaptic potentiation. The protein is Teashirt homolog 3 (Tshz3) of Mus musculus (Mouse).